Consider the following 85-residue polypeptide: Serine protease inhibitor Kazal-type 7 (85 aa).

The first 19 residues, 1 to 19 (MKITGGLLLLCTVVYFCSS), serve as a signal peptide directing secretion. The 60-residue stretch at 26 to 85 (SPKKVDCSIYKKYPVVAIPCPITYLPVCGSDYITYGNECHLCTESLKSNGRVQFLHDGSC) folds into the Kazal-like domain. Intrachain disulfides connect Cys-32–Cys-67, Cys-45–Cys-64, and Cys-53–Cys-85.

Its subcellular location is the secreted. Probable serine protease inhibitor. The polypeptide is Serine protease inhibitor Kazal-type 7 (SPINK7) (Homo sapiens (Human)).